The following is a 682-amino-acid chain: DNA ligase (682 aa).

Residues 42 to 46 (DAEYD), 91 to 92 (SL), and E124 contribute to the NAD(+) site. Residue K126 is the N6-AMP-lysine intermediate of the active site. Residues R147, E184, K302, and K326 each coordinate NAD(+). Positions 420, 423, 438, and 444 each coordinate Zn(2+). The BRCT domain occupies 603-682 (IADNPLKGKS…QEFIALTGEN (80 aa)).

It belongs to the NAD-dependent DNA ligase family. LigA subfamily. Mg(2+) is required as a cofactor. Requires Mn(2+) as cofactor.

It catalyses the reaction NAD(+) + (deoxyribonucleotide)n-3'-hydroxyl + 5'-phospho-(deoxyribonucleotide)m = (deoxyribonucleotide)n+m + AMP + beta-nicotinamide D-nucleotide.. Its function is as follows. DNA ligase that catalyzes the formation of phosphodiester linkages between 5'-phosphoryl and 3'-hydroxyl groups in double-stranded DNA using NAD as a coenzyme and as the energy source for the reaction. It is essential for DNA replication and repair of damaged DNA. This chain is DNA ligase, found in Actinobacillus pleuropneumoniae serotype 3 (strain JL03).